The chain runs to 374 residues: Proteasomal ubiquitin receptor ADRM1 homolog (374 aa).

Residues 13–131 (SSSGHIVEFK…KKVTDALNKP (119 aa)) form the Pru domain. 3 disordered regions span residues 126–166 (DALN…MNAP), 187–223 (SDTLPISSVPRGEDASSEADCEPSTNAAEEGSSNPLS), and 334–374 (ANLT…MDVD). 2 stretches are compositionally biased toward polar residues: residues 141 to 163 (SAGSNANTDRQSAGGSLISSSDM) and 209 to 223 (PSTNAAEEGSSNPLS). Residues 239–346 (SQKKEVAVSL…TKAEGGEDAA (108 aa)) enclose the DEUBAD domain. The segment covering 354 to 368 (DATREPEPKRNRPDN) has biased composition (basic and acidic residues).

It belongs to the ADRM1 family. As to quaternary structure, component of the 19S proteasome regulatory particle complex. The 26S proteasome consists of a 20S core particle (CP) and two 19S regulatory subunits (RP). Interacts with deubiquitinase ubh-4.

The protein resides in the cytoplasm. It is found in the nucleus. In terms of biological role, may function as a proteasomal ubiquitin receptor. May promote the deubiquitinating activity associated with the 26S proteasome. The polypeptide is Proteasomal ubiquitin receptor ADRM1 homolog (Caenorhabditis elegans).